We begin with the raw amino-acid sequence, 1033 residues long: Tyrosine-protein kinase-like otk (1033 aa).

An N-terminal signal peptide occupies residues 1 to 22 (MTARMISIYGLVLASMMASVWA). The Extracellular segment spans residues 23–581 (SSSRFQRLPQ…GGDGFLVTRA (559 aa)). 5 Ig-like C2-type domains span residues 25-108 (SRFQ…REAS), 109-199 (PPAK…RVMS), 251-365 (PEDL…LPIS), 368-463 (PGVL…VAIN), and 468-558 (PKFS…VQLV). Asparagine 39 is a glycosylation site (N-linked (GlcNAc...) asparagine). Disulfide bonds link cysteine 46–cysteine 95, cysteine 137–cysteine 188, cysteine 276–cysteine 354, and cysteine 399–cysteine 447. 7 N-linked (GlcNAc...) asparagine glycosylation sites follow: asparagine 336, asparagine 417, asparagine 429, asparagine 444, asparagine 457, asparagine 512, and asparagine 524. Cysteines 490 and 542 form a disulfide. The chain crosses the membrane as a helical span at residues 582–602 (VLITMTVALAYIVLVVGLMLW). At 603–1033 (CRYRRQARKA…LSKAMQSVEK (431 aa)) the chain is on the cytoplasmic side. Disordered regions lie at residues 617-679 (LSTK…KKSA) and 718-760 (SPTD…KTSM). Over residues 655 to 673 (KSSGDAQKSDDTACSQQSR) the composition is skewed to polar residues. Serine 678 carries the phosphoserine modification. Residues 692-1028 (LSELIQIGRG…QLGAALSKAM (337 aa)) form the Protein kinase; inactive domain. Residues 720–731 (TDKDADTEKQHS) are compositionally biased toward basic and acidic residues.

It belongs to the protein kinase superfamily. Tyr protein kinase family. Insulin receptor subfamily. Interacts with plexA; component of a receptor complex that mediates the repulsive signaling in response to Semaphorin ligands.

It is found in the cell membrane. Its function is as follows. Acts as a calcium-dependent, homophilic cell adhesion molecule that regulates neural recognition during the development of the nervous system. Component of the repulsive Plexin signaling response to regulate motor axon guidance at the embryonic stage. Also component of a receptor complex that is required in the adult visual system to innervate the lamina layer; specific targeting of R1-R6 axons. In Drosophila erecta (Fruit fly), this protein is Tyrosine-protein kinase-like otk.